Here is a 467-residue protein sequence, read N- to C-terminus: DNA polymerase IV (467 aa).

Positions 5-187 constitute a UmuC domain; that stretch reads VLHIDMDAFF…LPVGALWGVG (183 aa). Mg(2+)-binding residues include Asp9 and Asp104. The active site involves Glu105. 2 disordered regions span residues 364-383 and 429-449; these read PDTD…STQV and KGRT…DPLD.

Belongs to the DNA polymerase type-Y family. As to quaternary structure, monomer. The cofactor is Mg(2+).

It localises to the cytoplasm. It catalyses the reaction DNA(n) + a 2'-deoxyribonucleoside 5'-triphosphate = DNA(n+1) + diphosphate. Poorly processive, error-prone DNA polymerase involved in untargeted mutagenesis. Copies undamaged DNA at stalled replication forks, which arise in vivo from mismatched or misaligned primer ends. These misaligned primers can be extended by PolIV. Exhibits no 3'-5' exonuclease (proofreading) activity. May be involved in translesional synthesis, in conjunction with the beta clamp from PolIII. The polypeptide is DNA polymerase IV (Corynebacterium glutamicum (strain ATCC 13032 / DSM 20300 / JCM 1318 / BCRC 11384 / CCUG 27702 / LMG 3730 / NBRC 12168 / NCIMB 10025 / NRRL B-2784 / 534)).